The chain runs to 116 residues: Large ribosomal subunit protein uL18 (116 aa).

Belongs to the universal ribosomal protein uL18 family. Part of the 50S ribosomal subunit; part of the 5S rRNA/L5/L18/L25 subcomplex. Contacts the 5S and 23S rRNAs.

Functionally, this is one of the proteins that bind and probably mediate the attachment of the 5S RNA into the large ribosomal subunit, where it forms part of the central protuberance. In Shewanella denitrificans (strain OS217 / ATCC BAA-1090 / DSM 15013), this protein is Large ribosomal subunit protein uL18.